Consider the following 1217-residue polypeptide: Splicing factor 3B subunit 3 (1217 aa).

Interaction with PHF5A, SF3B1 and SF3B5 stretches follow at residues 105–119 (ETFG…VPGQ) and 145–168 (NRDA…TLVY). Position 156 is a phosphoserine (Ser156). Interaction with SF3B1 and SF3B5 stretches follow at residues 193 to 231 (DNDP…LEEH) and 786 to 804 (RKFV…ETDH). The tract at residues 1028–1049 (TYPRWVTTASLLDYDTVAGADK) is interaction with SF3B1. The segment at 1100-1123 (TVLSLQKTTLIPGGSESLVYTTLS) is interaction with SF3B5. The residue at position 1200 (Thr1200) is a Phosphothreonine.

It belongs to the RSE1 family. In terms of assembly, component of the 17S U2 SnRNP complex, a ribonucleoprotein complex that contains small nuclear RNA (snRNA) U2 and a number of specific proteins. Part of the SF3B subcomplex of the 17S U2 SnRNP complex. SF3B associates with the splicing subcomplex SF3A and a 12S RNA unit to form the U2 small nuclear ribonucleoproteins complex (U2 snRNP). Within the SF3B subcomplex, interacts directly with SF3B1 (via HEAT domain), SF3B5 and PHF5A. Identified in the spliceosome A complex; remains associated with the spliceosome throughout the splicing process. Component of the spliceosome B complex. Identified in the spliceosome C complex. Identified in the spliceosome E complex. Component of the minor (U12-type spliceosome) spliceosome. Within this complex, interacts with SCNM1. Associates with the STAGA transcription coactivator-HAT complex. Interacts with SUPT3H. Interacts with TAF3.

It is found in the nucleus. In terms of biological role, component of the 17S U2 SnRNP complex of the spliceosome, a large ribonucleoprotein complex that removes introns from transcribed pre-mRNAs. The 17S U2 SnRNP complex (1) directly participates in early spliceosome assembly and (2) mediates recognition of the intron branch site during pre-mRNA splicing by promoting the selection of the pre-mRNA branch-site adenosine, the nucleophile for the first step of splicing. Within the 17S U2 SnRNP complex, SF3B3 is part of the SF3B subcomplex, which is required for 'A' complex assembly formed by the stable binding of U2 snRNP to the branchpoint sequence in pre-mRNA. Sequence independent binding of SF3A and SF3B subcomplexes upstream of the branch site is essential, it may anchor U2 snRNP to the pre-mRNA. May also be involved in the assembly of the 'E' complex. Also acts as a component of the minor spliceosome, which is involved in the splicing of U12-type introns in pre-mRNAs. In Pongo abelii (Sumatran orangutan), this protein is Splicing factor 3B subunit 3 (SF3B3).